Here is a 381-residue protein sequence, read N- to C-terminus: Succinyl-diaminopimelate desuccinylase (381 aa).

Position 76 (His-76) interacts with Zn(2+). Asp-78 is a catalytic residue. A Zn(2+)-binding site is contributed by Asp-107. Glu-140 (proton acceptor) is an active-site residue. Positions 141, 169, and 354 each coordinate Zn(2+).

It belongs to the peptidase M20A family. DapE subfamily. Homodimer. Requires Zn(2+) as cofactor. The cofactor is Co(2+).

The enzyme catalyses N-succinyl-(2S,6S)-2,6-diaminopimelate + H2O = (2S,6S)-2,6-diaminopimelate + succinate. The protein operates within amino-acid biosynthesis; L-lysine biosynthesis via DAP pathway; LL-2,6-diaminopimelate from (S)-tetrahydrodipicolinate (succinylase route): step 3/3. Catalyzes the hydrolysis of N-succinyl-L,L-diaminopimelic acid (SDAP), forming succinate and LL-2,6-diaminopimelate (DAP), an intermediate involved in the bacterial biosynthesis of lysine and meso-diaminopimelic acid, an essential component of bacterial cell walls. This chain is Succinyl-diaminopimelate desuccinylase, found in Gluconobacter oxydans (strain 621H) (Gluconobacter suboxydans).